Here is a 249-residue protein sequence, read N- to C-terminus: 1-(5-phosphoribosyl)-5-[(5-phosphoribosylamino)methylideneamino] imidazole-4-carboxamide isomerase (249 aa).

D8 acts as the Proton acceptor in catalysis. D129 functions as the Proton donor in the catalytic mechanism.

Belongs to the HisA/HisF family.

It localises to the cytoplasm. It catalyses the reaction 1-(5-phospho-beta-D-ribosyl)-5-[(5-phospho-beta-D-ribosylamino)methylideneamino]imidazole-4-carboxamide = 5-[(5-phospho-1-deoxy-D-ribulos-1-ylimino)methylamino]-1-(5-phospho-beta-D-ribosyl)imidazole-4-carboxamide. It participates in amino-acid biosynthesis; L-histidine biosynthesis; L-histidine from 5-phospho-alpha-D-ribose 1-diphosphate: step 4/9. This Rhizobium rhizogenes (strain K84 / ATCC BAA-868) (Agrobacterium radiobacter) protein is 1-(5-phosphoribosyl)-5-[(5-phosphoribosylamino)methylideneamino] imidazole-4-carboxamide isomerase.